The chain runs to 318 residues: ATP-dependent (S)-NAD(P)H-hydrate dehydratase (318 aa).

Residues 3–313 (AREVFKRVIP…KEIGPAFDSL (311 aa)) form the YjeF C-terminal domain. (6S)-NADPHX-binding positions include G119 and 172–178 (NTNEFKR). ATP contacts are provided by residues 210-214 (KGSKD) and 229-238 (TSLRRCGGQG). D239 is a binding site for (6S)-NADPHX.

Belongs to the NnrD/CARKD family. It depends on Mg(2+) as a cofactor.

It localises to the cytoplasm. It catalyses the reaction (6S)-NADHX + ATP = ADP + phosphate + NADH + H(+). It carries out the reaction (6S)-NADPHX + ATP = ADP + phosphate + NADPH + H(+). Catalyzes the dehydration of the S-form of NAD(P)HX at the expense of ATP, which is converted to ADP. Together with NAD(P)HX epimerase, which catalyzes the epimerization of the S- and R-forms, the enzyme allows the repair of both epimers of NAD(P)HX, a damaged form of NAD(P)H that is a result of enzymatic or heat-dependent hydration. The polypeptide is ATP-dependent (S)-NAD(P)H-hydrate dehydratase (Batrachochytrium dendrobatidis (strain JAM81 / FGSC 10211) (Frog chytrid fungus)).